The following is a 361-amino-acid chain: Putative dual-specificity RNA methyltransferase RlmN (361 aa).

Catalysis depends on E91, which acts as the Proton acceptor. One can recognise a Radical SAM core domain in the interval 97–329 (QHYGLSVCVT…KKKGVNCVVR (233 aa)). The [4Fe-4S] cluster site is built by C111, C115, and C118. Residues 163 to 164 (GE), S195, 218 to 220 (SLH), and T296 each bind S-adenosyl-L-methionine.

Belongs to the radical SAM superfamily. RlmN family. [4Fe-4S] cluster serves as cofactor.

It is found in the cytoplasm. The enzyme catalyses adenosine(2503) in 23S rRNA + 2 reduced [2Fe-2S]-[ferredoxin] + 2 S-adenosyl-L-methionine = 2-methyladenosine(2503) in 23S rRNA + 5'-deoxyadenosine + L-methionine + 2 oxidized [2Fe-2S]-[ferredoxin] + S-adenosyl-L-homocysteine. It catalyses the reaction adenosine(37) in tRNA + 2 reduced [2Fe-2S]-[ferredoxin] + 2 S-adenosyl-L-methionine = 2-methyladenosine(37) in tRNA + 5'-deoxyadenosine + L-methionine + 2 oxidized [2Fe-2S]-[ferredoxin] + S-adenosyl-L-homocysteine. Functionally, specifically methylates position 2 of adenine 2503 in 23S rRNA and position 2 of adenine 37 in tRNAs. This Streptococcus pneumoniae (strain CGSP14) protein is Putative dual-specificity RNA methyltransferase RlmN.